Reading from the N-terminus, the 383-residue chain is Chorismate synthase (383 aa).

The NADP(+) site is built by R39 and R45. Residues 127 to 129, 249 to 250, G294, 309 to 313, and R335 contribute to the FMN site; these read RAS, QS, and KPIPT.

Belongs to the chorismate synthase family. In terms of assembly, homotetramer. FMNH2 is required as a cofactor.

The enzyme catalyses 5-O-(1-carboxyvinyl)-3-phosphoshikimate = chorismate + phosphate. It participates in metabolic intermediate biosynthesis; chorismate biosynthesis; chorismate from D-erythrose 4-phosphate and phosphoenolpyruvate: step 7/7. Functionally, catalyzes the anti-1,4-elimination of the C-3 phosphate and the C-6 proR hydrogen from 5-enolpyruvylshikimate-3-phosphate (EPSP) to yield chorismate, which is the branch point compound that serves as the starting substrate for the three terminal pathways of aromatic amino acid biosynthesis. This reaction introduces a second double bond into the aromatic ring system. In Caldicellulosiruptor bescii (strain ATCC BAA-1888 / DSM 6725 / KCTC 15123 / Z-1320) (Anaerocellum thermophilum), this protein is Chorismate synthase.